The primary structure comprises 112 residues: Large ribosomal subunit protein P1w (112 aa).

The tract at residues 85–112 is disordered; that stretch reads AAAPAAEEKKKDEPAEESDGDLGFGLFD. Serine 102 carries the post-translational modification Phosphoserine.

It belongs to the eukaryotic ribosomal protein P1/P2 family. P1 and P2 exist as dimers at the large ribosomal subunit.

Plays an important role in the elongation step of protein synthesis. This chain is Large ribosomal subunit protein P1w (RPP1A), found in Arabidopsis thaliana (Mouse-ear cress).